The sequence spans 630 residues: Phosphatidylinositol 4-kinase gamma 5 (630 aa).

A Ubiquitin-like; degenerate domain is found at 41 to 98 (RRVFVQTETGCVLGLELDRSDNAHTVKRKLQVALNFPIEESSLTFGDLVLKNDLTAVR). Residues 162–459 (GIDPVAVNSG…LIGEKDAESP (298 aa)) enclose the PI3K/PI4K catalytic domain. Positions 168 to 174 (VNSGLGG) are G-loop. ATP is bound by residues 169–175 (NSGLGGA), Lys190, and 279–282 (QQFI). The segment at 312–320 (LNTDRHSGN) is catalytic loop. An activation loop region spans residues 339 to 365 (PIDHGLCLPETLEDPYFEWIHWPQASI). An ATP-binding site is contributed by Asp341. The tract at residues 500 to 527 (LSKVEETTEDGEEEEEEDREEEENDRAD) is disordered. Residues 506–524 (TTEDGEEEEEEDREEEEND) show a composition bias toward acidic residues. At Ser571 the chain carries Phosphoserine.

Belongs to the PI3/PI4-kinase family. Type II PI4K subfamily. Interacts with AHK2.

The catalysed reaction is a 1,2-diacyl-sn-glycero-3-phospho-(1D-myo-inositol) + ATP = a 1,2-diacyl-sn-glycero-3-phospho-(1D-myo-inositol 4-phosphate) + ADP + H(+). Its function is as follows. The phosphorylation of phosphatidylinositol (PI) to PI4P is the first committed step in the generation of phosphatidylinositol 4,5-bisphosphate (PIP2), a precursor of the second messenger inositol 1,4,5-trisphosphate (InsP3). This Arabidopsis thaliana (Mouse-ear cress) protein is Phosphatidylinositol 4-kinase gamma 5 (PI4KG5).